A 59-amino-acid chain; its full sequence is Conotoxin Bu1.2 (59 aa).

Residues 1 to 16 (MFTVFLLVVLATTVVS) form the signal peptide. Positions 17–42 (FSTDDESDGSNEEPSADQAARSAMNR) are excised as a propeptide. Residues 18 to 43 (STDDESDGSNEEPSADQAARSAMNRP) are disordered. Residues 19 to 31 (TDDESDGSNEEPS) are compositionally biased toward acidic residues. 2 cysteine pairs are disulfide-bonded: C46–C52 and C47–C57. G58 carries the glycine amide modification.

It belongs to the conotoxin A superfamily. Expressed by the venom duct.

Its subcellular location is the secreted. The protein is Conotoxin Bu1.2 of Conus bullatus (Bubble cone).